Reading from the N-terminus, the 149-residue chain is Small ribosomal subunit protein uS13 (149 aa).

Belongs to the universal ribosomal protein uS13 family. In terms of assembly, part of the 30S ribosomal subunit. Forms a loose heterodimer with protein S19. Forms two bridges to the 50S subunit in the 70S ribosome.

Located at the top of the head of the 30S subunit, it contacts several helices of the 16S rRNA. In the 70S ribosome it contacts the 23S rRNA (bridge B1a) and protein L5 of the 50S subunit (bridge B1b), connecting the 2 subunits; these bridges are implicated in subunit movement. The sequence is that of Small ribosomal subunit protein uS13 from Thermococcus kodakarensis (strain ATCC BAA-918 / JCM 12380 / KOD1) (Pyrococcus kodakaraensis (strain KOD1)).